Reading from the N-terminus, the 323-residue chain is Aquaporin-4 (323 aa).

Residues 1-36 (MSDRPAARRWGKCGPLCTRESIMVAFKGVWTQTFWK) lie on the Cytoplasmic side of the membrane. Residues Cys13 and Cys17 are each lipidated (S-palmitoyl cysteine). A helical transmembrane segment spans residues 37–57 (AVTAEFLAMLIFVLLSLGSTI). Over 58 to 69 (NWGGAEKPLPVD) the chain is Extracellular. Residues 70 to 89 (MVLISLCFGLSIATMVQCFG) traverse the membrane as a helical segment. At 90 to 93 (HISG) the chain is on the cytoplasmic side. Residues 94-101 (GHINPAVT) constitute an intramembrane region (discontinuously helical). Residues 97 to 99 (NPA) carry the NPA 1 motif. At 102–115 (VAMVCTRRISIAKS) the chain is on the cytoplasmic side. Phosphoserine; by PKG is present on Ser111. The helical transmembrane segment at 116–136 (VFYIAAQCLGAIIGAGILYLV) threads the bilayer. The Extracellular portion of the chain corresponds to 137 to 155 (TPPSVVGGLGVTTVHGNLS). An N-linked (GlcNAc...) asparagine glycan is attached at Asn153. The helical transmembrane segment at 156-176 (AGHGLLVELIITFQLVFTIFA) threads the bilayer. At 177–184 (SCDSKRTD) the chain is on the cytoplasmic side. Ser180 carries the post-translational modification Phosphoserine; by PKC. A helical transmembrane segment spans residues 185-205 (VTGSIALAIGISVAIGHLFAI). Asn206 carries an N-linked (GlcNAc...) asparagine glycan. At 206–208 (NYT) the chain is on the extracellular side. An intramembrane region (discontinuously helical) is located at residues 209–222 (GASMNPARSFGPAV). Positions 213–215 (NPA) match the NPA 2 motif. Residues 223–231 (IMGNWENHW) lie on the Extracellular side of the membrane. A helical transmembrane segment spans residues 232-252 (IYWVGPIIGAVLAGGLYEYVF). Residues 253 to 323 (CPDVELKRRF…DPSGEVLSSV (71 aa)) lie on the Cytoplasmic side of the membrane. Ser276 and Ser285 each carry phosphoserine. Position 289 is a phosphothreonine (Thr289). A Phosphoserine modification is found at Ser321.

It belongs to the MIP/aquaporin (TC 1.A.8) family. In terms of assembly, homotetramer. The tetramers can form oligomeric arrays in membranes. The size of the oligomers differs between tissues and is smaller in skeletal muscle than in brain. Interaction between AQP4 oligomeric arrays in close-by cells can contribute to cell-cell adhesion. Part of a complex containing MLC1, TRPV4, HEPACAM and ATP1B1. Phosphorylation by PKC at Ser-180 reduces conductance by 50%. Phosphorylation by PKG at Ser-111 in response to glutamate increases conductance by 40%. Post-translationally, isoform 2: Palmitoylated on its N-terminal region. Isoform 1: Not palmitoylated. In terms of tissue distribution, detected in brain and lung.

The protein localises to the cell membrane. The protein resides in the basolateral cell membrane. Its subcellular location is the endosome membrane. It is found in the sarcolemma. It localises to the cell projection. The enzyme catalyses H2O(in) = H2O(out). Functionally, forms a water-specific channel. Plays an important role in brain water homeostasis and in glymphatic solute transport. Required for a normal rate of water exchange across the blood brain interface. Required for normal levels of cerebrospinal fluid influx into the brain cortex and parenchyma along paravascular spaces that surround penetrating arteries, and for normal drainage of interstitial fluid along paravenous drainage pathways. Thereby, it is required for normal clearance of solutes from the brain interstitial fluid, including soluble beta-amyloid peptides derived from APP. Plays a redundant role in urinary water homeostasis and urinary concentrating ability. This chain is Aquaporin-4 (AQP4), found in Bos taurus (Bovine).